Reading from the N-terminus, the 149-residue chain is Transcriptional regulator MraZ (149 aa).

2 consecutive SpoVT-AbrB domains span residues 7–54 (KYVN…GISH) and 83–126 (AVQL…QPQN).

It belongs to the MraZ family. As to quaternary structure, forms oligomers.

Its subcellular location is the cytoplasm. The protein localises to the nucleoid. This is Transcriptional regulator MraZ from Rickettsia peacockii (strain Rustic).